Here is a 1673-residue protein sequence, read N- to C-terminus: Calmodulin-binding transcription activator 1 (1673 aa).

Positions 63–188 (KCSSLPKERH…YLNVPAIEDC (126 aa)) form a DNA-binding region, CG-1. Residues 112 to 119 (RKKVKYRK) carry the Nuclear localization signal motif. The disordered stretch occupies residues 283–375 (HRIISPKVEP…LNSDPDMVDS (93 aa)). The span at 302–313 (EVQHNDVSEGKH) shows a compositional bias: basic and acidic residues. Residues 337–367 (HQSSTEVSSTNQVEVPDTTQSSPVSISSGLN) show a composition bias toward polar residues. The region spanning 875 to 953 (DYSPEWSYPE…ISNSVVFEYK (79 aa)) is the IPT/TIG domain. The segment at 990–1021 (MAEMTGSQQHKQASGGGSSGGGSGSGNGGSQA) is disordered. The segment covering 1003-1018 (SGGGSSGGGSGSGNGG) has biased composition (gly residues). ANK repeat units lie at residues 1064 to 1093 (RGMT…KHAD), 1109 to 1129 (FSCT…AVVL), and 1143 to 1172 (LGRL…DEQA). Disordered stretches follow at residues 1215–1246 (ASTN…PKKH) and 1264–1317 (ALSL…GSQP). Residues 1273–1289 (RKQSPSSKQSVPETLSP) are compositionally biased toward polar residues. 3 IQ domains span residues 1547–1576 (QEVA…AAIL), 1577–1599 (IQSK…AAVL), and 1600–1622 (IQKY…TAVI).

This sequence belongs to the CAMTA family. In terms of assembly, may interact with calmodulin. As to expression, normally expressed in non-neoplastic adult central nervous system tissues: detected in whole brain, cerebellum, brain cortex, occipital lobe, frontal lobe, temporal lobe, putamen. Expression levels are low in oligodendroglial tumors, and are reduced by half in oligodendroglioma and astrocytoma cases with 1p loss of heterozygosity. Detected in neuroblastic-type cultured neuroblastoma cells. Expressed in heart and kidney.

It localises to the nucleus. It is found in the cytoplasm. Functionally, transcriptional activator. The polypeptide is Calmodulin-binding transcription activator 1 (Homo sapiens (Human)).